Reading from the N-terminus, the 494-residue chain is Guanosine-5'-triphosphate,3'-diphosphate pyrophosphatase (494 aa).

This sequence belongs to the GppA/Ppx family. GppA subfamily.

The catalysed reaction is guanosine 3'-diphosphate 5'-triphosphate + H2O = guanosine 3',5'-bis(diphosphate) + phosphate + H(+). Its pathway is purine metabolism; ppGpp biosynthesis; ppGpp from GTP: step 2/2. Catalyzes the conversion of pppGpp to ppGpp. Guanosine pentaphosphate (pppGpp) is a cytoplasmic signaling molecule which together with ppGpp controls the 'stringent response', an adaptive process that allows bacteria to respond to amino acid starvation, resulting in the coordinated regulation of numerous cellular activities. The protein is Guanosine-5'-triphosphate,3'-diphosphate pyrophosphatase of Escherichia coli O127:H6 (strain E2348/69 / EPEC).